The sequence spans 85 residues: MKVTLIAILTCAAVLVLHTTAAEELEAESQLMEVGMPDTELAAVDEERLFECSVSCEIEKEGNKDCKKKKCKGGWKCKFNMCVKA.

An N-terminal signal peptide occupies residues 1–22 (MKVTLIAILTCAAVLVLHTTAA). Positions 23–48 (EELEAESQLMEVGMPDTELAAVDEER) are excised as a propeptide. Cystine bridges form between Cys52/Cys66, Cys56/Cys77, and Cys71/Cys82.

The protein belongs to the neurotoxin 12 (Hwtx-2) family. 02 (Hwtx-2) subfamily. Expressed by the venom gland.

Its subcellular location is the secreted. Postsynaptic neurotoxin. The sequence is that of U4-theraphotoxin-Hhn1e from Cyriopagopus hainanus (Chinese bird spider).